We begin with the raw amino-acid sequence, 109 residues long: Nucleoid-associated protein BU482 (109 aa).

This sequence belongs to the YbaB/EbfC family. In terms of assembly, homodimer.

It localises to the cytoplasm. It is found in the nucleoid. Binds to DNA and alters its conformation. May be involved in regulation of gene expression, nucleoid organization and DNA protection. This is Nucleoid-associated protein BU482 from Buchnera aphidicola subsp. Acyrthosiphon pisum (strain APS) (Acyrthosiphon pisum symbiotic bacterium).